We begin with the raw amino-acid sequence, 237 residues long: Leucyl/phenylalanyl-tRNA--protein transferase (237 aa).

It belongs to the L/F-transferase family.

The protein localises to the cytoplasm. It catalyses the reaction N-terminal L-lysyl-[protein] + L-leucyl-tRNA(Leu) = N-terminal L-leucyl-L-lysyl-[protein] + tRNA(Leu) + H(+). The enzyme catalyses N-terminal L-arginyl-[protein] + L-leucyl-tRNA(Leu) = N-terminal L-leucyl-L-arginyl-[protein] + tRNA(Leu) + H(+). It carries out the reaction L-phenylalanyl-tRNA(Phe) + an N-terminal L-alpha-aminoacyl-[protein] = an N-terminal L-phenylalanyl-L-alpha-aminoacyl-[protein] + tRNA(Phe). Its function is as follows. Functions in the N-end rule pathway of protein degradation where it conjugates Leu, Phe and, less efficiently, Met from aminoacyl-tRNAs to the N-termini of proteins containing an N-terminal arginine or lysine. The chain is Leucyl/phenylalanyl-tRNA--protein transferase from Shewanella baltica (strain OS185).